Consider the following 608-residue polypeptide: Growth hormone receptor (608 aa).

The first 16 residues, 1–16, serve as a signal peptide directing secretion; it reads MDLRHLLFTLALVCAN. Residues 17–237 lie on the Extracellular side of the membrane; that stretch reads DSLSASDDLL…EFVHCAEEIE (221 aa). Cystine bridges form between Cys-34/Cys-44 and Cys-72/Cys-83. Asn-86 is a glycosylation site (N-linked (GlcNAc...) asparagine). The cysteines at positions 97 and 111 are disulfide-linked. Residues 122 to 226 enclose the Fibronectin type-III domain; the sequence is PPVHLNWTLL…ILYVSFTQAG (105 aa). Asn-127, Asn-132, and Asn-171 each carry an N-linked (GlcNAc...) asparagine glycan. The short motif at 211 to 215 is the WSXWS motif element; sequence FGEFS. The chain crosses the membrane as a helical span at residues 238-261; the sequence is FPWFLVVVFGVCGLAVTAILILLS. At 262-608 the chain is on the cytoplasmic side; that stretch reads KQPRLKMLIF…STDQLNKIMP (347 aa). The required for JAK2 binding stretch occupies residues 267–352; it reads KMLIFPPVPV…HLKSHSCLGA (86 aa). A Box 1 motif motif is present at residues 270-278; it reads IFPPVPVPK. Residues 313-322 carry the UbE motif motif; that stretch reads DLWVEFIELD. 2 stretches are compositionally biased toward polar residues: residues 413 to 426 and 438 to 451; these read ANTD…STQS and STDS…TQLS. The interval 413 to 451 is disordered; sequence ANTDTQQPHTSTQSESRESWPPFADSTDSANPSVQTQLS.

It belongs to the type I cytokine receptor family. Type 1 subfamily. Post-translationally, on GH binding, proteolytically cleaved, in vitro, to produce GHBP. As to expression, broad specificity.

The protein resides in the cell membrane. Its subcellular location is the secreted. In terms of biological role, receptor for pituitary gland growth hormone (GH1) involved in regulating postnatal body growth. On ligand binding, couples to the JAK2/STAT5 pathway. Functionally, the soluble form (GHBP) acts as a reservoir of growth hormone in plasma and may be a modulator/inhibitor of GH signaling. This Gallus gallus (Chicken) protein is Growth hormone receptor (GHR).